Consider the following 217-residue polypeptide: Protein-L-isoaspartate O-methyltransferase (217 aa).

Residue serine 59 is part of the active site.

This sequence belongs to the methyltransferase superfamily. L-isoaspartyl/D-aspartyl protein methyltransferase family.

Its subcellular location is the cytoplasm. It carries out the reaction [protein]-L-isoaspartate + S-adenosyl-L-methionine = [protein]-L-isoaspartate alpha-methyl ester + S-adenosyl-L-homocysteine. Its function is as follows. Catalyzes the methyl esterification of L-isoaspartyl residues in peptides and proteins that result from spontaneous decomposition of normal L-aspartyl and L-asparaginyl residues. It plays a role in the repair and/or degradation of damaged proteins. This Methanothermobacter thermautotrophicus (strain ATCC 29096 / DSM 1053 / JCM 10044 / NBRC 100330 / Delta H) (Methanobacterium thermoautotrophicum) protein is Protein-L-isoaspartate O-methyltransferase (pcm).